The following is a 443-amino-acid chain: Oxygen-dependent coproporphyrinogen-III oxidase, mitochondrial (443 aa).

The N-terminal 98 residues, 1 to 98 (MALRLGRLGS…EMVPKSSGAR (98 aa)), are a transit peptide targeting the mitochondrion. Residues 89 to 112 (EMVPKSSGARSPSPGRREEDGDEL) form a disordered region. Ser101 carries the phosphoserine modification. Residues 103-112 (GRREEDGDEL) are compositionally biased toward basic and acidic residues. The tract at residues 182 to 191 (VLQDGRVFEK) is important for dimerization. Coproporphyrinogen III is bound at residue Ser233. His247 (proton donor) is an active-site residue. Residue 249–251 (NYR) participates in coproporphyrinogen III binding. The important for dimerization stretch occupies residues 381–417 (YVEFNLLYDRGTKFGLFTPGSRIESILMSLPLTARWE). An N6-acetyllysine; alternate modification is found at Lys393. Lys393 carries the post-translational modification N6-succinyllysine; alternate. Coproporphyrinogen III is bound at residue 400 to 402 (GSR).

This sequence belongs to the aerobic coproporphyrinogen-III oxidase family. In terms of assembly, homodimer. In terms of tissue distribution, expressed in erythroid cells. Expressed in liver.

The protein resides in the mitochondrion intermembrane space. The enzyme catalyses coproporphyrinogen III + O2 + 2 H(+) = protoporphyrinogen IX + 2 CO2 + 2 H2O. It functions in the pathway porphyrin-containing compound metabolism; protoporphyrin-IX biosynthesis; protoporphyrinogen-IX from coproporphyrinogen-III (O2 route): step 1/1. Involved in the heme biosynthesis. Catalyzes the aerobic oxidative decarboxylation of propionate groups of rings A and B of coproporphyrinogen-III to yield the vinyl groups in protoporphyrinogen-IX. In Mus musculus (Mouse), this protein is Oxygen-dependent coproporphyrinogen-III oxidase, mitochondrial (Cpox).